The chain runs to 73 residues: uncharacterized protein (73 aa).

It belongs to the asfivirus DP63R family.

This is an uncharacterized protein from African swine fever virus (isolate Tick/Malawi/Lil 20-1/1983) (ASFV).